The sequence spans 280 residues: 2,3,4,5-tetrahydropyridine-2,6-dicarboxylate N-succinyltransferase (280 aa).

This sequence belongs to the transferase hexapeptide repeat family.

It localises to the cytoplasm. It catalyses the reaction (S)-2,3,4,5-tetrahydrodipicolinate + succinyl-CoA + H2O = (S)-2-succinylamino-6-oxoheptanedioate + CoA. Its pathway is amino-acid biosynthesis; L-lysine biosynthesis via DAP pathway; LL-2,6-diaminopimelate from (S)-tetrahydrodipicolinate (succinylase route): step 1/3. The sequence is that of 2,3,4,5-tetrahydropyridine-2,6-dicarboxylate N-succinyltransferase from Methylorubrum populi (strain ATCC BAA-705 / NCIMB 13946 / BJ001) (Methylobacterium populi).